A 325-amino-acid polypeptide reads, in one-letter code: Ribosomal RNA small subunit methyltransferase H (325 aa).

S-adenosyl-L-methionine is bound by residues 42–44, Asp-62, Phe-86, Asp-105, and Gln-112; that span reads GGH.

It belongs to the methyltransferase superfamily. RsmH family.

It is found in the cytoplasm. It carries out the reaction cytidine(1402) in 16S rRNA + S-adenosyl-L-methionine = N(4)-methylcytidine(1402) in 16S rRNA + S-adenosyl-L-homocysteine + H(+). In terms of biological role, specifically methylates the N4 position of cytidine in position 1402 (C1402) of 16S rRNA. This Cupriavidus metallidurans (strain ATCC 43123 / DSM 2839 / NBRC 102507 / CH34) (Ralstonia metallidurans) protein is Ribosomal RNA small subunit methyltransferase H.